We begin with the raw amino-acid sequence, 217 residues long: MENKFEIGRIIRAKNISDAWYRGLNIIWNHGRVITDERGSQIKEFMDLMVVIENPYTDRIPADTAWNEERLEEYAKQLISGENIQDFEYTYGQRLRNWNGEVDQIEYVIEKLKESPTSRRATAVTWIPPVDTKVNEVPCMILDDFKIRDEKVHLTTLFRSHDFGGAYPANLYGLSKLLEYVAEKVGVEPGVITTVSISAHVYDHDWDMVENIVKGIN.

The active site involves Cys-139.

It belongs to the thymidylate synthase family. Archaeal-type ThyA subfamily. Monomer.

It is found in the cytoplasm. It functions in the pathway pyrimidine metabolism; dTTP biosynthesis. Its function is as follows. May catalyze the biosynthesis of dTMP using an unknown cosubstrate. The protein is Putative thymidylate synthase of Methanosarcina mazei (strain ATCC BAA-159 / DSM 3647 / Goe1 / Go1 / JCM 11833 / OCM 88) (Methanosarcina frisia).